Consider the following 537-residue polypeptide: Phenylalanine--tRNA ligase beta subunit (537 aa).

In terms of domain architecture, B5 spans 268-343 (FNFRPYRLNL…KSYGIENVRE (76 aa)). Residues Asp321, Asp327, Glu330, and Asp331 each contribute to the Mg(2+) site.

This sequence belongs to the phenylalanyl-tRNA synthetase beta subunit family. Type 2 subfamily. Tetramer of two alpha and two beta subunits. The cofactor is Mg(2+).

It localises to the cytoplasm. The catalysed reaction is tRNA(Phe) + L-phenylalanine + ATP = L-phenylalanyl-tRNA(Phe) + AMP + diphosphate + H(+). The chain is Phenylalanine--tRNA ligase beta subunit from Thermoplasma volcanium (strain ATCC 51530 / DSM 4299 / JCM 9571 / NBRC 15438 / GSS1).